A 729-amino-acid chain; its full sequence is Catalase-peroxidase 1 (729 aa).

Positions tryptophan 98 to tyrosine 226 form a cross-link, tryptophyl-tyrosyl-methioninium (Trp-Tyr) (with M-252). Histidine 99 (proton acceptor) is an active-site residue. The tryptophyl-tyrosyl-methioninium (Tyr-Met) (with W-98) cross-link spans tyrosine 226–methionine 252. Histidine 267 contacts heme b.

This sequence belongs to the peroxidase family. Peroxidase/catalase subfamily. Homodimer or homotetramer. Heme b is required as a cofactor. Post-translationally, formation of the three residue Trp-Tyr-Met cross-link is important for the catalase, but not the peroxidase activity of the enzyme.

It carries out the reaction H2O2 + AH2 = A + 2 H2O. It catalyses the reaction 2 H2O2 = O2 + 2 H2O. Functionally, bifunctional enzyme with both catalase and broad-spectrum peroxidase activity. The polypeptide is Catalase-peroxidase 1 (Cellvibrio japonicus (strain Ueda107) (Pseudomonas fluorescens subsp. cellulosa)).